Here is a 460-residue protein sequence, read N- to C-terminus: 3-isopropylmalate dehydratase large subunit (460 aa).

Positions 338, 398, and 401 each coordinate [4Fe-4S] cluster.

It belongs to the aconitase/IPM isomerase family. LeuC type 1 subfamily. In terms of assembly, heterodimer of LeuC and LeuD. The cofactor is [4Fe-4S] cluster.

The enzyme catalyses (2R,3S)-3-isopropylmalate = (2S)-2-isopropylmalate. It participates in amino-acid biosynthesis; L-leucine biosynthesis; L-leucine from 3-methyl-2-oxobutanoate: step 2/4. Functionally, catalyzes the isomerization between 2-isopropylmalate and 3-isopropylmalate, via the formation of 2-isopropylmaleate. This Streptococcus gordonii (strain Challis / ATCC 35105 / BCRC 15272 / CH1 / DL1 / V288) protein is 3-isopropylmalate dehydratase large subunit.